The sequence spans 192 residues: Flavin prenyltransferase UbiX (192 aa).

Residues 10–12 (GAS), Ser-36, 92–95 (SMTT), and Arg-127 each bind FMN. Dimethylallyl phosphate contacts are provided by Tyr-157 and Lys-173.

Belongs to the UbiX/PAD1 family.

The enzyme catalyses dimethylallyl phosphate + FMNH2 = prenylated FMNH2 + phosphate. Flavin prenyltransferase that catalyzes the synthesis of the prenylated FMN cofactor (prenyl-FMN) for 4-hydroxy-3-polyprenylbenzoic acid decarboxylase UbiD. The prenyltransferase is metal-independent and links a dimethylallyl moiety from dimethylallyl monophosphate (DMAP) to the flavin N5 and C6 atoms of FMN. This Chlamydia pneumoniae (Chlamydophila pneumoniae) protein is Flavin prenyltransferase UbiX.